We begin with the raw amino-acid sequence, 77 residues long: Sec-independent protein translocase protein TatA (77 aa).

The chain crosses the membrane as a helical span at residues Met1–Gly21. Residues Lys40–Ala77 form a disordered region. Residues Asp64–Ala77 show a composition bias toward basic and acidic residues.

Belongs to the TatA/E family. As to quaternary structure, the Tat system comprises two distinct complexes: a TatABC complex, containing multiple copies of TatA, TatB and TatC subunits, and a separate TatA complex, containing only TatA subunits. Substrates initially bind to the TatABC complex, which probably triggers association of the separate TatA complex to form the active translocon.

It is found in the cell inner membrane. In terms of biological role, part of the twin-arginine translocation (Tat) system that transports large folded proteins containing a characteristic twin-arginine motif in their signal peptide across membranes. TatA could form the protein-conducting channel of the Tat system. In Burkholderia thailandensis (strain ATCC 700388 / DSM 13276 / CCUG 48851 / CIP 106301 / E264), this protein is Sec-independent protein translocase protein TatA.